Here is a 316-residue protein sequence, read N- to C-terminus: MASIISGTAAAEGLLADLTRDVARFSQVHGYAPTLVAVLVGDDPASHIYVRKKIEQCRKVGMESVEHRLPADCSEEDLLALIASLNADERVHGILVQLPLPAQIDSGKVLDTIDPRKDVDGFHPVNVFRLSTGTGGLVPCTPMGCMILLRSVLPDLKGKQAVVIGKSNIVGKPVAMLLLEQGCTVTVCGRHTRNLAEVCRNADIIVAAAGTPHLVKGYWVKAGAVVIDVGINRIALDDGRSRIVGDVASDEIGHAAAFTPVPGGVGPMTIACLAAEYVQAARRRAWCWRRTNRHSFSLEGEGYGALLSGAKLGAVG.

NADP(+)-binding positions include 165–167 (GKS) and I231.

Belongs to the tetrahydrofolate dehydrogenase/cyclohydrolase family. In terms of assembly, homodimer.

It catalyses the reaction (6R)-5,10-methylene-5,6,7,8-tetrahydrofolate + NADP(+) = (6R)-5,10-methenyltetrahydrofolate + NADPH. The catalysed reaction is (6R)-5,10-methenyltetrahydrofolate + H2O = (6R)-10-formyltetrahydrofolate + H(+). Its pathway is one-carbon metabolism; tetrahydrofolate interconversion. Its function is as follows. Catalyzes the oxidation of 5,10-methylenetetrahydrofolate to 5,10-methenyltetrahydrofolate and then the hydrolysis of 5,10-methenyltetrahydrofolate to 10-formyltetrahydrofolate. The polypeptide is Bifunctional protein FolD (Sphingobium chlorophenolicum).